A 425-amino-acid chain; its full sequence is Multifunctional CCA protein (425 aa).

ATP contacts are provided by G8 and R11. The CTP site is built by G8 and R11. Residues D21 and D23 each contribute to the Mg(2+) site. Residues R91, R141, and R144 each coordinate ATP. The CTP site is built by R91, R141, and R144. An HD domain is found at 230-331 (TGVHLMMVLD…VRLLERCDAI (102 aa)).

Belongs to the tRNA nucleotidyltransferase/poly(A) polymerase family. Bacterial CCA-adding enzyme type 1 subfamily. In terms of assembly, monomer. Can also form homodimers and oligomers. It depends on Mg(2+) as a cofactor. Ni(2+) serves as cofactor.

The catalysed reaction is a tRNA precursor + 2 CTP + ATP = a tRNA with a 3' CCA end + 3 diphosphate. The enzyme catalyses a tRNA with a 3' CCA end + 2 CTP + ATP = a tRNA with a 3' CCACCA end + 3 diphosphate. Functionally, catalyzes the addition and repair of the essential 3'-terminal CCA sequence in tRNAs without using a nucleic acid template. Adds these three nucleotides in the order of C, C, and A to the tRNA nucleotide-73, using CTP and ATP as substrates and producing inorganic pyrophosphate. tRNA 3'-terminal CCA addition is required both for tRNA processing and repair. Also involved in tRNA surveillance by mediating tandem CCA addition to generate a CCACCA at the 3' terminus of unstable tRNAs. While stable tRNAs receive only 3'-terminal CCA, unstable tRNAs are marked with CCACCA and rapidly degraded. This is Multifunctional CCA protein from Acidovorax ebreus (strain TPSY) (Diaphorobacter sp. (strain TPSY)).